A 117-amino-acid polypeptide reads, in one-letter code: MNNDAKFPIQLTDFAARKVKFFTENEIINSNSHLKLRVYIIGGGCSGFQYRFILDDKISSDDCIVENNGVSLVIDPMSLQYLFGGIIDYYEGLEGSRFVVINPNAKNTCSCGSSFSV.

3 residues coordinate iron-sulfur cluster: Cys-45, Cys-109, and Cys-111.

This sequence belongs to the HesB/IscA family. Homodimer. It depends on iron-sulfur cluster as a cofactor.

In terms of biological role, required for insertion of 4Fe-4S clusters for at least IspG. The polypeptide is Iron-sulfur cluster insertion protein ErpA (Blochmanniella pennsylvanica (strain BPEN)).